Here is a 158-residue protein sequence, read N- to C-terminus: Small ribosomal subunit protein uS7 (158 aa).

Belongs to the universal ribosomal protein uS7 family. Part of the 30S ribosomal subunit. Contacts proteins S9 and S11.

One of the primary rRNA binding proteins, it binds directly to 16S rRNA where it nucleates assembly of the head domain of the 30S subunit. Is located at the subunit interface close to the decoding center, probably blocks exit of the E-site tRNA. This is Small ribosomal subunit protein uS7 from Gluconacetobacter diazotrophicus (strain ATCC 49037 / DSM 5601 / CCUG 37298 / CIP 103539 / LMG 7603 / PAl5).